We begin with the raw amino-acid sequence, 565 residues long: Mediator of RNA polymerase II transcription subunit 17 (565 aa).

Polar residues predominate over residues 138–152 (TSLNSDRLGQDSNDN). Positions 138–160 (TSLNSDRLGQDSNDNQESKATDS) are disordered.

It belongs to the Mediator complex subunit 17 family. Component of the Mediator complex.

The protein resides in the nucleus. Component of the Mediator complex, a coactivator involved in the regulated transcription of nearly all RNA polymerase II-dependent genes. Mediator functions as a bridge to convey information from gene-specific regulatory proteins to the basal RNA polymerase II transcription machinery. Mediator is recruited to promoters by direct interactions with regulatory proteins and serves as a scaffold for the assembly of a functional preinitiation complex with RNA polymerase II and the general transcription factors. This Candida albicans (strain SC5314 / ATCC MYA-2876) (Yeast) protein is Mediator of RNA polymerase II transcription subunit 17 (SRB4).